A 146-amino-acid polypeptide reads, in one-letter code: Ribonuclease H (146 aa).

Residues 1-143 enclose the RNase H type-1 domain; the sequence is MKKRVTIYTD…CDELARQAIK (143 aa). Mg(2+) contacts are provided by Asp-10, Glu-48, Asp-70, and Asp-135.

Belongs to the RNase H family. As to quaternary structure, monomer. Requires Mg(2+) as cofactor.

The protein resides in the cytoplasm. It catalyses the reaction Endonucleolytic cleavage to 5'-phosphomonoester.. Its function is as follows. Endonuclease that specifically degrades the RNA of RNA-DNA hybrids. The protein is Ribonuclease H of Chlorobium limicola (strain DSM 245 / NBRC 103803 / 6330).